A 716-amino-acid polypeptide reads, in one-letter code: Probable calcium-binding mitochondrial carrier K02F3.2 (716 aa).

Positions 1-345 (MSFDHLLTSS…CLKDIQAIDP (345 aa)) are N-terminal domain. 4 consecutive EF-hand domains span residues 93–121 (YNKE…FCAF), 127–162 (SPDA…TQPL), 165–195 (QDFD…CQLL), and 198–233 (FYEE…VKGH). D106, T108, D110, E117, D140, N142, S144, T146, and E151 together coordinate Ca(2+). Residues D211, N213, N215, T217, and D222 each contribute to the Ca(2+) site. Residues 346–362 (ERLKRVSQMDRLINIKA) form a linker loop domain region. Residues 372–664 (GTAFLESAYR…RLFYVDFAGS (293 aa)) are carrier domain. Solcar repeat units lie at residues 376-468 (LESA…MRDK), 475-560 (IPLY…AKLA), and 568-656 (NSPG…LQRL). 6 consecutive transmembrane segments (helical) span residues 382 to 399 (FLLG…VYPI), 443 to 462 (GLLP…LTMN), 485 to 498 (GTGG…TNPL), 535 to 554 (GSRA…FPAY), 574 to 591 (FASA…VTPA), and 631 to 650 (GTAA…LLTY). Residues 665–716 (RPTGSELATTKTIQDESSTNPDHVGGYKLAAATFSGIEHKFGLFLPKFETSK) are C-terminal domain.

This sequence belongs to the mitochondrial carrier (TC 2.A.29) family. As to quaternary structure, homodimer (via N-terminus).

It is found in the mitochondrion inner membrane. Its function is as follows. Mitochondrial and calcium-binding carrier that catalyzes the calcium-dependent exchange of cytoplasmic glutamate with mitochondrial aspartate across the mitochondrial inner membrane. The sequence is that of Probable calcium-binding mitochondrial carrier K02F3.2 from Caenorhabditis elegans.